The sequence spans 401 residues: Exodeoxyribonuclease 7 large subunit (401 aa).

This sequence belongs to the XseA family. In terms of assembly, heterooligomer composed of large and small subunits.

Its subcellular location is the cytoplasm. It carries out the reaction Exonucleolytic cleavage in either 5'- to 3'- or 3'- to 5'-direction to yield nucleoside 5'-phosphates.. In terms of biological role, bidirectionally degrades single-stranded DNA into large acid-insoluble oligonucleotides, which are then degraded further into small acid-soluble oligonucleotides. This Lachnoclostridium phytofermentans (strain ATCC 700394 / DSM 18823 / ISDg) (Clostridium phytofermentans) protein is Exodeoxyribonuclease 7 large subunit.